Here is a 295-residue protein sequence, read N- to C-terminus: Glycine--tRNA ligase alpha subunit (295 aa).

Belongs to the class-II aminoacyl-tRNA synthetase family. Tetramer of two alpha and two beta subunits.

It localises to the cytoplasm. The catalysed reaction is tRNA(Gly) + glycine + ATP = glycyl-tRNA(Gly) + AMP + diphosphate. The protein is Glycine--tRNA ligase alpha subunit (glyQ) of Bacillus subtilis (strain 168).